The chain runs to 31 residues: LysM-domain containing protein (31 aa).

A LysM 1 repeat occupies Tyr1–Pro28.

The polypeptide is LysM-domain containing protein (Jatropha curcas (Barbados nut)).